The primary structure comprises 351 residues: MPILLEHIQLNDEDLKDTKHLAEILKYKNNSIKTIINVLEWEDSNIRYCYEKSNVYYFITFFIIVGLVWAIFPEVWLWCEQVFCISPTIHIIICCLYFIITIILFLFLCGVVGTFLHLWATFFTLSKCDSKILKLKEGLFTTLSLIWISTSLKTILKTKYAICRDYAKLTSAILHNLNIKHYFLVYPTHVAVAVKIDDYYYVIDQKLPIYKIDVWLKKLGKEKVKIYTPVDIYNSKLKFVEKYYKNENNLKSEISDDILRKIEEDVKKELQIKNAEQYNKKVEPIPVKLSIPIENYDEITHYSIVRVISKEIYNKFLTNIKNVSNIEIKKDEGKFAVNVYYEIPNSIPNSK.

The next 2 membrane-spanning stretches (helical) occupy residues 58–78 (FITF…VWLW) and 91–111 (IIIC…LCGV).

Belongs to the UPF0252 family.

It is found in the cell membrane. In Methanocaldococcus jannaschii (strain ATCC 43067 / DSM 2661 / JAL-1 / JCM 10045 / NBRC 100440) (Methanococcus jannaschii), this protein is UPF0252 protein MJECL39.